The sequence spans 232 residues: Homeobox protein Rhox13 (232 aa).

A disordered region spans residues 45-114 (QAAVASSHDS…EAAAPSVAAV (70 aa)). The span at 68-105 (SDSESESDSESESDSSDSSDESDDDSSTSDEDTSDPEE) shows a compositional bias: acidic residues. The homeobox DNA-binding region spans 148-207 (RRGPPFHFAQWQVEEMESLFEETQYPDLLTRGELARTLNVPEVKVKVWFTNRRAKQRKIE).

Belongs to the paired-like homeobox family.

It localises to the nucleus. In terms of biological role, probable transcription factor. The polypeptide is Homeobox protein Rhox13 (Mus musculus (Mouse)).